Reading from the N-terminus, the 93-residue chain is Cell division protein FtsB (93 aa).

Residues 1–3 lie on the Cytoplasmic side of the membrane; the sequence is MRV. The helical transmembrane segment at 4 to 21 threads the bilayer; the sequence is TLVVLLALFLALQYRLWF. Topologically, residues 22–93 are periplasmic; the sequence is GKNSLPDYWR…FFRLVPDRNP (72 aa). A coiled-coil region spans residues 28 to 75; it reads DYWRLQQEVSNQKNTNENLERRNQLIYADIEDLREGEDALEERARNEL.

Belongs to the FtsB family. Part of a complex composed of FtsB, FtsL and FtsQ.

The protein resides in the cell inner membrane. In terms of biological role, essential cell division protein. May link together the upstream cell division proteins, which are predominantly cytoplasmic, with the downstream cell division proteins, which are predominantly periplasmic. This is Cell division protein FtsB from Idiomarina loihiensis (strain ATCC BAA-735 / DSM 15497 / L2-TR).